Here is a 99-residue protein sequence, read N- to C-terminus: Aphid transmission protein (99 aa).

It belongs to the caulimoviridae ORF II family.

In terms of biological role, this protein is involved in virus transmission. The polypeptide is Aphid transmission protein (Cauliflower mosaic virus (strain W260) (CaMV)).